A 593-amino-acid chain; its full sequence is Progranulin (593 aa).

Positions 1 to 17 (MWTLVSWVALTAGLVAG) are cleaved as a signal peptide. N-linked (GlcNAc...) asparagine glycosylation occurs at Asn-118. 2 cysteine pairs are disulfide-bonded: Cys-126-Cys-139 and Cys-133-Cys-149. N-linked (GlcNAc...) asparagine glycosylation is found at Asn-236 and Asn-265. Cystine bridges form between Cys-284/Cys-296, Cys-290/Cys-306, Cys-297/Cys-314, Cys-307/Cys-321, Cys-315/Cys-328, Cys-322/Cys-335, Cys-366/Cys-378, Cys-372/Cys-388, Cys-397/Cys-410, and Cys-404/Cys-416. The N-linked (GlcNAc...) asparagine glycan is linked to Asn-368. Asn-530 is a glycosylation site (N-linked (GlcNAc...) asparagine).

It belongs to the granulin family. Progranulin is secreted as a homodimer. Interacts with SLPI; interaction protects progranulin from proteolysis. Interacts (via region corresponding to granulin-7 peptide) with CTSD; stabilizes CTSD and increases its proteolytic activity. Interacts (via region corresponding to granulin-7 peptide) with SORT1; this interaction mediates endocytosis and lysosome delivery of progranulin; interaction occurs at the neuronal cell surface in a stressed nervous system. Interacts with PSAP; facilitates lysosomal delivery of progranulin from the extracellular space and the biosynthetic pathway. Forms a complex with PSAP and M6PR; PSAP bridges the binding between progranulin and M6PR. Forms a complex with PSAP and SORT1; progranulin bridges the interaction between PSAP and SORT1; facilitates lysosomal targeting of PSAP via SORT1; interaction enhances PSAP uptake in primary cortical neurons. Interacts (via regions corresponding to granulin-2 and granulin-7 peptides) with GBA1; this interaction prevents aggregation of GBA1-SCARB2 complex via interaction with HSPA1A upon stress. Interacts (via region corresponding to granulin-7 peptide) with HSPA1A; mediates recruitment of HSPA1A to GBA1 and prevents GBA1 aggregation in response to stress. Cleaved by ELANE; proteolysis is blocked by SLPI and is concentration- and time-dependent and induces CXCL8/IL-8 production; granulin-3 and granulin-4 are resistant to ELANE. Cleaved by CTSL in lysosome thus regulating the maturation and turnover of progranulin within the lysosome. In myelogenous leukemic cell lines of promonocytic, promyelocytic, and proerythroid lineage, in fibroblasts, and very strongly in epithelial cell lines. Present in inflammatory cells and bone marrow. Highest levels in kidney.

The protein localises to the secreted. It is found in the lysosome. Secreted protein that acts as a key regulator of lysosomal function and as a growth factor involved in inflammation, wound healing and cell proliferation. Regulates protein trafficking to lysosomes, and also the activity of lysosomal enzymes. Also facilitates the acidification of lysosomes, causing degradation of mature CTSD by CTSB. In addition, functions as a wound-related growth factor that acts directly on dermal fibroblasts and endothelial cells to promote division, migration and the formation of capillary-like tubule structures. Also promotes epithelial cell proliferation by blocking TNF-mediated neutrophil activation preventing release of oxidants and proteases. Moreover, modulates inflammation in neurons by preserving neurons survival, axonal outgrowth and neuronal integrity. In terms of biological role, promotes proliferation of the epithelial cell line A431 in culture. Its function is as follows. Inhibits epithelial cell proliferation and induces epithelial cells to secrete IL-8. Functionally, stabilizes CTSD through interaction with CTSD leading to maintain its aspartic-type peptidase activity. This chain is Progranulin, found in Homo sapiens (Human).